The chain runs to 502 residues: Arginine decarboxylase (502 aa).

K42 is subject to N6-(pyridoxal phosphate)lysine. Position 226-236 (I226–Y236) interacts with substrate.

The protein belongs to the Orn/Lys/Arg decarboxylase class-II family. SpeA subfamily. It depends on pyridoxal 5'-phosphate as a cofactor. Mg(2+) is required as a cofactor.

It catalyses the reaction L-arginine + H(+) = agmatine + CO2. It participates in amine and polyamine biosynthesis; agmatine biosynthesis; agmatine from L-arginine: step 1/1. In Solanum lycopersicum (Tomato), this protein is Arginine decarboxylase.